A 118-amino-acid polypeptide reads, in one-letter code: MSRVKRGVTARARHKKVLNQAKGYYGARSRVYRVAKQAVIKAGQYAYRDRKVKKRTFRSLWIVRINAAARQHDISYSQLINGLNKAGVELDRKALAELAVYNKDAFAAVVEKAKAALA.

Belongs to the bacterial ribosomal protein bL20 family.

Its function is as follows. Binds directly to 23S ribosomal RNA and is necessary for the in vitro assembly process of the 50S ribosomal subunit. It is not involved in the protein synthesizing functions of that subunit. The polypeptide is Large ribosomal subunit protein bL20 (Francisella tularensis subsp. tularensis (strain WY96-3418)).